Consider the following 369-residue polypeptide: Glutamate 5-kinase (369 aa).

Lys-10 contacts ATP. Substrate is bound by residues Ser-50, Asp-137, and Asn-149. Residues 169-170 and 210-216 each bind ATP; these read TD and TGGMVTK. Residues 276-349 enclose the PUA domain; it reads EGSIFIDEGA…GKHSEEMLAT (74 aa).

It belongs to the glutamate 5-kinase family.

The protein resides in the cytoplasm. The catalysed reaction is L-glutamate + ATP = L-glutamyl 5-phosphate + ADP. Its pathway is amino-acid biosynthesis; L-proline biosynthesis; L-glutamate 5-semialdehyde from L-glutamate: step 1/2. In terms of biological role, catalyzes the transfer of a phosphate group to glutamate to form L-glutamate 5-phosphate. This Desulfitobacterium hafniense (strain Y51) protein is Glutamate 5-kinase.